Consider the following 149-residue polypeptide: Transcriptional repressor NrdR (149 aa).

Residues 3–34 (CPFCSAVDTKVIDSRLVGEGTQVRRRRQCVIC) fold into a zinc finger. One can recognise an ATP-cone domain in the interval 49 to 139 (PRVIKSNDVR…VYRSFEDIRE (91 aa)).

Belongs to the NrdR family. Requires Zn(2+) as cofactor.

Negatively regulates transcription of bacterial ribonucleotide reductase nrd genes and operons by binding to NrdR-boxes. In Sodalis glossinidius (strain morsitans), this protein is Transcriptional repressor NrdR.